The primary structure comprises 561 residues: Putative transport protein YbjL (561 aa).

Transmembrane regions (helical) follow at residues Leu8 to Gly28, Leu32 to Gln52, Phe66 to Phe86, Met94 to Phe114, and Asn158 to Ala178. 2 RCK C-terminal domains span residues Arg200 to Asn288 and Val292 to Phe373. 5 consecutive transmembrane segments (helical) span residues Leu383–Phe403, Phe406–Leu426, Phe447–Gly467, Met475–Ala495, and Gly537–Trp557.

This sequence belongs to the AAE transporter (TC 2.A.81) family. YbjL subfamily.

Its subcellular location is the cell membrane. This chain is Putative transport protein YbjL, found in Salmonella choleraesuis (strain SC-B67).